A 91-amino-acid chain; its full sequence is VASENRYEGTVGVSGNLPFLGTADVAGEFPTAGIGEILYGCGNGAVGITREGGLGYGAGYGGGYGLGYGGYGGGYGLGYGGYGGCGCGCGY.

A central domain region spans residues 1–51 (VASENRYEGTVGVSGNLPFLGTADVAGEFPTAGIGEILYGCGNGAVGITRE). Residues 52 to 91 (GGLGYGAGYGGGYGLGYGGYGGGYGLGYGGYGGCGCGCGY) are right arm (Gly-rich tandem repeats).

It belongs to the chorion protein family.

This protein is one of many from the eggshell of the silk moth. The polypeptide is Chorion class B protein M3A5 (Bombyx mori (Silk moth)).